We begin with the raw amino-acid sequence, 61 residues long: Potassium channel toxin alpha-KTx 15.6 (61 aa).

The N-terminal stretch at Met1 to Ser23 is a signal peptide. Gln24 is subject to Pyrrolidone carboxylic acid. Disulfide bonds link Cys31/Cys52, Cys37/Cys57, and Cys41/Cys59.

The protein belongs to the short scorpion toxin superfamily. Potassium channel inhibitor family. Alpha-KTx 15 subfamily. As to expression, expressed by the venom gland.

Its subcellular location is the secreted. Functionally, irreversibly blocks the A-type voltage-gated potassium channels in rat cerebellum granular cells (190 nM induce 50% inhibitory effect) (IC(50)=190 nM). Also weakly inhibits Kv1.2/KCNA2 and Kv1.3/KCNA3. The chain is Potassium channel toxin alpha-KTx 15.6 from Tityus discrepans (Venezuelan scorpion).